The chain runs to 314 residues: tRNA-cytidine(32) 2-sulfurtransferase (314 aa).

The short motif at 46-51 is the PP-loop motif element; the sequence is SGGKDS. Residues cysteine 121, cysteine 124, and cysteine 212 each coordinate [4Fe-4S] cluster.

The protein belongs to the TtcA family. In terms of assembly, homodimer. It depends on Mg(2+) as a cofactor. [4Fe-4S] cluster is required as a cofactor.

It localises to the cytoplasm. It catalyses the reaction cytidine(32) in tRNA + S-sulfanyl-L-cysteinyl-[cysteine desulfurase] + AH2 + ATP = 2-thiocytidine(32) in tRNA + L-cysteinyl-[cysteine desulfurase] + A + AMP + diphosphate + H(+). The protein operates within tRNA modification. Functionally, catalyzes the ATP-dependent 2-thiolation of cytidine in position 32 of tRNA, to form 2-thiocytidine (s(2)C32). The sulfur atoms are provided by the cysteine/cysteine desulfurase (IscS) system. This is tRNA-cytidine(32) 2-sulfurtransferase from Nitrosomonas europaea (strain ATCC 19718 / CIP 103999 / KCTC 2705 / NBRC 14298).